A 22-amino-acid polypeptide reads, in one-letter code: Conotoxin MIIIJ (22 aa).

At glutamine 1 the chain carries Pyrrolidone carboxylic acid. 3 disulfide bridges follow: cysteine 3/cysteine 21, cysteine 4/cysteine 19, and cysteine 9/cysteine 22.

Belongs to the conotoxin M superfamily. As to expression, expressed by the venom duct.

It localises to the secreted. Functionally, probable competitive antagonist of fish muscle acetylcholine receptor. Inhibits postsynaptic nicotinic acetylcholine receptors (nAChRs) from fish (zebrafish and goldfish) and frogs (IC(50)=0.1 uM). Protects these receptors from block by alpha-bungarotoxin and alpha-conotoxin EI. Does not block nAChRs at the neuromuscular junction of Rana pipiens. Shows a weak inhibition on mammalian adult and fetal muscle nAChRs (alpha-1-beta-1-delta-epsilon/CHRNA1-CHRNB1-CHRND-CHRNE and alpha-1 beta-1 gamma delta/CHRNA1-CHRNB1-CHRNG-CHRND) (IC(50)=3-45 uM). In vivo, induces paralysis in goldfish (Carassius auratus) but not mice. The polypeptide is Conotoxin MIIIJ (Conus magus (Magical cone)).